A 276-amino-acid polypeptide reads, in one-letter code: Adenylyl-sulfate kinase 1, chloroplastic (276 aa).

The N-terminal 38 residues, 1 to 38, are a transit peptide targeting the chloroplast; that stretch reads MIAAGAKSLLGLSMASPKGIFDSNSMSNSRSVVVVRAC. A disordered region spans residues 46–74; it reads TLSHNKNGSIPEVKSINGHTGQKQGPLST. The span at 62–74 shows a compositional bias: polar residues; sequence NGHTGQKQGPLST. 108 to 116 contacts ATP; sequence GLSGSGKST. Residues aspartate 138, arginine 141, arginine 155, asparagine 158, 181–182, and glycine 231 contribute to the substrate site; that span reads IS. The Phosphoserine intermediate role is filled by serine 182.

This sequence belongs to the APS kinase family. Homodimer; disulfide-linked. Interacts with APK2. As to expression, expressed in root vasculature, root tips, leaf epidermal and guard cells, pollen grains and funiculus of developing seeds.

It localises to the plastid. The protein resides in the chloroplast. The enzyme catalyses adenosine 5'-phosphosulfate + ATP = 3'-phosphoadenylyl sulfate + ADP + H(+). Its pathway is sulfur metabolism; hydrogen sulfide biosynthesis; sulfite from sulfate: step 2/3. Functionally, catalyzes the synthesis of activated sulfate. Essential for plant reproduction and viability. Required for the production of glucosinolates. The protein is Adenylyl-sulfate kinase 1, chloroplastic (APK1) of Arabidopsis thaliana (Mouse-ear cress).